The sequence spans 127 residues: Mating pheromone 4 (127 aa).

Positions 1-16 (MKAIFIILAILMVTQA) are cleaved as a signal peptide. The propeptide occupies 17-42 (FKMTSKVKSMNMSRNMSKNTSTLGTK).

The protein localises to the secreted. Functionally, mating ciliate pheromones (or gamones) are diffusible extracellular communication signals that distinguish different intraspecific classes of cells commonly referred to as 'mating types'. They prepare the latter for conjugation by changing their cell surface properties. The chain is Mating pheromone 4 (PHR4) from Euplotoides octocarinatus (Freshwater ciliate).